A 443-amino-acid polypeptide reads, in one-letter code: Probable D-serine dehydratase (443 aa).

Residue Lys-118 is modified to N6-(pyridoxal phosphate)lysine.

It belongs to the serine/threonine dehydratase family. DsdA subfamily. The cofactor is pyridoxal 5'-phosphate.

It catalyses the reaction D-serine = pyruvate + NH4(+). The sequence is that of Probable D-serine dehydratase from Aeromonas hydrophila subsp. hydrophila (strain ATCC 7966 / DSM 30187 / BCRC 13018 / CCUG 14551 / JCM 1027 / KCTC 2358 / NCIMB 9240 / NCTC 8049).